The primary structure comprises 1367 residues: Phospholipid-transporting ATPase C4F10.16c (1367 aa).

The Cytoplasmic portion of the chain corresponds to 1–154 (MPSLINFDAI…PKNLWNQFKN (154 aa)). The interval 34 to 104 (HNGSLAHEGP…KKNEAGTESG (71 aa)) is disordered. Basic and acidic residues predominate over residues 50 to 70 (SSRHHESQFSQEAHAEQRSRD). Residues 77–92 (FEGSCNNSDQSWTSRV) show a composition bias toward polar residues. Residues 155–172 (IANAFFLFVTLLQCIPLF) traverse the membrane as a helical segment. The Lumenal segment spans residues 173–177 (CPEHL). A helical membrane pass occupies residues 178–197 (GLSFIPLSVILLTTAIKDGI). Residues 198-482 (EDYRRCVLDK…PSKRSRITRD (285 aa)) lie on the Cytoplasmic side of the membrane. The helical transmembrane segment at 483–503 (LNWTIILNFLLLFAMCLFSGV) threads the bilayer. Residues 504–531 (LRSIYSAQNNSARVFELSKNSNTAPAHG) lie on the Lumenal side of the membrane. The helical transmembrane segment at 532-552 (IISIFTSLILFQNLVPISLYI) threads the bilayer. Topologically, residues 553-1091 (TMDIVRSIQS…GRWDYKRMSQ (539 aa)) are cytoplasmic. Asp-600 serves as the catalytic 4-aspartylphosphate intermediate. ATP is bound by residues Asp-600, Lys-601, Thr-602, Glu-724, Phe-765, Ser-767, Lys-770, Lys-788, Arg-822, Thr-823, Thr-902, Gly-903, Asp-904, Arg-1009, and Lys-1015. Asp-600 is a Mg(2+) binding site. Thr-602 is a Mg(2+) binding site. Asp-1035 is a binding site for Mg(2+). ATP contacts are provided by Asn-1038 and Asp-1039. Residue Asp-1039 participates in Mg(2+) binding. Residues 1092–1112 (MISFFFYKNVIWTFILFWYQF) form a helical membrane-spanning segment. Residues 1113 to 1124 (YNEFDGNYIFDY) lie on the Lumenal side of the membrane. A helical transmembrane segment spans residues 1125–1145 (TYVMLFNLLFTSLPVIIAGCF). At 1146 to 1174 (DQDVDASVSMKNPSLYQRGILGLEWNGKR) the chain is on the cytoplasmic side. The chain crosses the membrane as a helical span at residues 1175 to 1197 (FWSYMLDGIYQSLVCFGVALFVF). Topologically, residues 1198–1212 (KFGDFVSWTGRNIEC) are lumenal. The helical transmembrane segment at 1213-1233 (IEDIGLFISSPTIFVINIFIL) threads the bilayer. Over 1234–1240 (MNQERLN) the chain is Cytoplasmic. A helical transmembrane segment spans residues 1241–1261 (LISLITWMFSIGVFWIWTFIY). At 1262 to 1276 (SEVGPSYAFHKSASR) the chain is on the lumenal side. A helical transmembrane segment spans residues 1277–1297 (TCQTFGFWCVTVLTIALCLLP). Arg-1298 is a binding site for a 1,2-diacyl-sn-glycero-3-phospho-L-serine. Topologically, residues 1298 to 1367 (RFSYICLQKL…TSVSFDDSNK (70 aa)) are cytoplasmic.

The protein belongs to the cation transport ATPase (P-type) (TC 3.A.3) family. Type IV subfamily. It depends on Mg(2+) as a cofactor.

Its subcellular location is the cell membrane. The protein localises to the endoplasmic reticulum membrane. The enzyme catalyses ATP + H2O + phospholipidSide 1 = ADP + phosphate + phospholipidSide 2.. It carries out the reaction a 1,2-diacyl-sn-glycero-3-phosphoethanolamine(out) + ATP + H2O = a 1,2-diacyl-sn-glycero-3-phosphoethanolamine(in) + ADP + phosphate + H(+). The catalysed reaction is a 1,2-diacyl-sn-glycero-3-phosphocholine(out) + ATP + H2O = a 1,2-diacyl-sn-glycero-3-phosphocholine(in) + ADP + phosphate + H(+). It catalyses the reaction a beta-D-glucosyl-(1&lt;-&gt;1')-N-acylsphing-4-enine(out) + ATP + H2O = a beta-D-glucosyl-(1&lt;-&gt;1')-N-acylsphing-4-enine(in) + ADP + phosphate + H(+). The enzyme catalyses a 1,2-diacyl-sn-glycero-3-phospho-L-serine(out) + ATP + H2O = a 1,2-diacyl-sn-glycero-3-phospho-L-serine(in) + ADP + phosphate + H(+). Functionally, catalytic component of a P4-ATPase flippase complex which catalyzes the hydrolysis of ATP coupled to the transport of glucosylceramide, phosphatidylcholine, phosphatidylethanolamine, and small amounts of phosphatidylserine from the lumenal to the cytosolic leaflet of the cell membrane and ensures the maintenance of asymmetric distribution of phospholipids. The protein is Phospholipid-transporting ATPase C4F10.16c of Schizosaccharomyces pombe (strain 972 / ATCC 24843) (Fission yeast).